The chain runs to 176 residues: Non-specific lipid transfer protein GPI-anchored 12 (176 aa).

A signal peptide spans 1-20 (MLTTNTLAVLLLLFLSLCSG). Cystine bridges form between cysteine 40–cysteine 83, cysteine 50–cysteine 67, cysteine 68–cysteine 110, and cysteine 81–cysteine 120. Residue asparagine 46 is glycosylated (N-linked (GlcNAc...) asparagine). Asparagine 149 carries GPI-anchor amidated asparagine lipidation. The propeptide at 150-176 (GAMTTKYCGVALNSLALLLLFTFLSLS) is removed in mature form.

This sequence belongs to the plant LTP family. In terms of tissue distribution, preferentially expressed in the endodermis of hypocotyls and roots of seedlings, and in petals and anthers of inflorescences. May also be expressed in siliques, carpels and pedicels.

The protein resides in the cell membrane. In terms of biological role, probable lipid transfer protein. This is Non-specific lipid transfer protein GPI-anchored 12 from Arabidopsis thaliana (Mouse-ear cress).